A 151-amino-acid polypeptide reads, in one-letter code: Large ribosomal subunit protein uL15 (151 aa).

A disordered region spans residues 1 to 51 (MPLKIEDLKPTPGSRKPKKRLGRGIGSGLGKTAGKGHKGEKARGRGKIGRT). Over residues 23 to 33 (RGIGSGLGKTA) the composition is skewed to gly residues.

It belongs to the universal ribosomal protein uL15 family. In terms of assembly, part of the 50S ribosomal subunit.

Functionally, binds to the 23S rRNA. This Petrotoga mobilis (strain DSM 10674 / SJ95) protein is Large ribosomal subunit protein uL15.